A 66-amino-acid polypeptide reads, in one-letter code: Large ribosomal subunit protein uL29 (66 aa).

Belongs to the universal ribosomal protein uL29 family.

In Bacillus anthracis (strain CDC 684 / NRRL 3495), this protein is Large ribosomal subunit protein uL29.